A 120-amino-acid polypeptide reads, in one-letter code: Ribosome-binding factor A (120 aa).

It belongs to the RbfA family. As to quaternary structure, monomer. Binds 30S ribosomal subunits, but not 50S ribosomal subunits or 70S ribosomes.

Its subcellular location is the cytoplasm. One of several proteins that assist in the late maturation steps of the functional core of the 30S ribosomal subunit. Associates with free 30S ribosomal subunits (but not with 30S subunits that are part of 70S ribosomes or polysomes). Required for efficient processing of 16S rRNA. May interact with the 5'-terminal helix region of 16S rRNA. The chain is Ribosome-binding factor A from Limosilactobacillus fermentum (strain NBRC 3956 / LMG 18251) (Lactobacillus fermentum).